Here is a 287-residue protein sequence, read N- to C-terminus: Large ribosomal subunit protein uL2 (287 aa).

The disordered stretch occupies residues 221-287; it reads RGSVMNPCDH…SKRSRGGRDS (67 aa). Residues 258 to 287 show a composition bias toward basic residues; it reads KTRKRNKPSNKFVLRKRRKTSKRSRGGRDS.

Belongs to the universal ribosomal protein uL2 family. In terms of assembly, part of the 50S ribosomal subunit. Forms a bridge to the 30S subunit in the 70S ribosome.

Its function is as follows. One of the primary rRNA binding proteins. Required for association of the 30S and 50S subunits to form the 70S ribosome, for tRNA binding and peptide bond formation. It has been suggested to have peptidyltransferase activity; this is somewhat controversial. Makes several contacts with the 16S rRNA in the 70S ribosome. This is Large ribosomal subunit protein uL2 from Synechococcus sp. (strain CC9311).